The sequence spans 250 residues: Putative ABC transporter ATP-binding protein YjkB (250 aa).

The ABC transporter domain maps to Ile13–Leu245. Gly49 to Ser56 contributes to the ATP binding site.

This sequence belongs to the ABC transporter superfamily.

This chain is Putative ABC transporter ATP-binding protein YjkB (yjkB), found in Bacillus subtilis (strain 168).